A 594-amino-acid polypeptide reads, in one-letter code: Neuronal PAS domain-containing protein 1 (594 aa).

One can recognise a bHLH domain in the interval Gln45–Arg98. The 71-residue stretch at Glu135–Ile205 folds into the PAS 1 domain. Residues Gly206 to Ala237 are disordered. Positions Ser212–Ser223 are enriched in low complexity. Positions Ala294–Asp360 constitute a PAS 2 domain. One can recognise a PAC domain in the interval Thr366–Ala409. A disordered region spans residues Gln427 to Phe498. Over residues Asp453–Glu480 the composition is skewed to basic and acidic residues.

As to quaternary structure, efficient DNA binding requires dimerization with another bHLH protein. Interacts with ARNT; forms a heterodimer that binds core DNA sequence 5'-[AG]CGTG-3' within the hypoxia response element (HRE) leading to a transcriptional repressor on its target gene TH. As to expression, expressed in brain in inhibitory interneurons. Also found in spinal cord.

The protein resides in the nucleus. In terms of biological role, may control regulatory pathways relevant to schizophrenia and to psychotic illness. May play a role in late central nervous system development by modulating EPO expression in response to cellular oxygen level. Forms a heterodimer that binds core DNA sequence 5'-TACGTG-3' within the hypoxia response element (HRE) leading to transcriptional repression on its target gene TH. This Mus musculus (Mouse) protein is Neuronal PAS domain-containing protein 1 (Npas1).